A 166-amino-acid chain; its full sequence is Interferon gamma (166 aa).

Residues 1-23 form the signal peptide; the sequence is MKYTSYFLALLLCVLLGFSGSYG. Pyrrolidone carboxylic acid is present on Gln-24. N-linked (GlcNAc...) asparagine glycans are attached at residues Asn-39 and Asn-106.

It belongs to the type II (or gamma) interferon family. Homodimer. Interacts with IFNGR1 (via extracellular domain); this interaction promotes IFNGR1 dimerization. In terms of tissue distribution, released primarily from activated T lymphocytes.

It is found in the secreted. Type II interferon produced by immune cells such as T-cells and NK cells that plays crucial roles in antimicrobial, antiviral, and antitumor responses by activating effector immune cells and enhancing antigen presentation. Primarily signals through the JAK-STAT pathway after interaction with its receptor IFNGR1 to affect gene regulation. Upon IFNG binding, IFNGR1 intracellular domain opens out to allow association of downstream signaling components JAK2, JAK1 and STAT1, leading to STAT1 activation, nuclear translocation and transcription of IFNG-regulated genes. Many of the induced genes are transcription factors such as IRF1 that are able to further drive regulation of a next wave of transcription. Plays a role in class I antigen presentation pathway by inducing a replacement of catalytic proteasome subunits with immunoproteasome subunits. In turn, increases the quantity, quality, and repertoire of peptides for class I MHC loading. Increases the efficiency of peptide generation also by inducing the expression of activator PA28 that associates with the proteasome and alters its proteolytic cleavage preference. Up-regulates as well MHC II complexes on the cell surface by promoting expression of several key molecules such as cathepsins B/CTSB, H/CTSH, and L/CTSL. Participates in the regulation of hematopoietic stem cells during development and under homeostatic conditions by affecting their development, quiescence, and differentiation. The sequence is that of Interferon gamma (IFNG) from Bubalus bubalis (Domestic water buffalo).